The primary structure comprises 154 residues: Regulatory protein RecX (154 aa).

This sequence belongs to the RecX family.

It localises to the cytoplasm. Its function is as follows. Modulates RecA activity. This is Regulatory protein RecX from Trichlorobacter lovleyi (strain ATCC BAA-1151 / DSM 17278 / SZ) (Geobacter lovleyi).